Consider the following 103-residue polypeptide: Co-chaperonin GroES (103 aa).

It belongs to the GroES chaperonin family. In terms of assembly, heptamer of 7 subunits arranged in a ring. Interacts with the chaperonin GroEL.

Its subcellular location is the cytoplasm. Functionally, together with the chaperonin GroEL, plays an essential role in assisting protein folding. The GroEL-GroES system forms a nano-cage that allows encapsulation of the non-native substrate proteins and provides a physical environment optimized to promote and accelerate protein folding. GroES binds to the apical surface of the GroEL ring, thereby capping the opening of the GroEL channel. The polypeptide is Co-chaperonin GroES (Dinoroseobacter shibae (strain DSM 16493 / NCIMB 14021 / DFL 12)).